The sequence spans 344 residues: Putative NAD(P)H nitroreductase MT3217 (344 aa).

Residues 40 to 44 (QPWRW) and R326 contribute to the FMN site.

This sequence belongs to the nitroreductase family. In terms of assembly, interacts with human TLR2. FMN serves as cofactor.

Functionally, stimulates pro-inflammatory cytokine expression via TLR2 signaling pathway. Activation of TLR2 results in the phosphorylation and activation of NF-kappa-B. Also induces TLR2 expression. May influence the innate immune responses to facilitate the survival of M.tuberculosis in the granulomatous microenvironment. The sequence is that of Putative NAD(P)H nitroreductase MT3217 from Mycobacterium tuberculosis (strain CDC 1551 / Oshkosh).